A 322-amino-acid chain; its full sequence is Pantothenate kinase (322 aa).

100-107 (GSVAVGKS) lines the ATP pocket.

The protein belongs to the prokaryotic pantothenate kinase family.

Its subcellular location is the cytoplasm. The catalysed reaction is (R)-pantothenate + ATP = (R)-4'-phosphopantothenate + ADP + H(+). It functions in the pathway cofactor biosynthesis; coenzyme A biosynthesis; CoA from (R)-pantothenate: step 1/5. This chain is Pantothenate kinase, found in Brucella canis (strain ATCC 23365 / NCTC 10854 / RM-666).